Consider the following 527-residue polypeptide: Catalase (527 aa).

Residues 1–22 (MADSRDPASDQMKLWKEQRAAQ) are compositionally biased toward basic and acidic residues. A disordered region spans residues 1-34 (MADSRDPASDQMKLWKEQRAAQKPDVLTTGGGNP). The residue at position 2 (Ala-2) is an N-acetylalanine. Ser-9 is modified (phosphoserine). An N6-succinyllysine modification is found at Lys-13. Catalysis depends on residues His-75 and Asn-148. 4 residues coordinate NADP(+): His-194, Ser-201, Arg-203, and Asn-213. Lys-221 is modified (N6-succinyllysine). At Lys-233 the chain carries N6-acetyllysine. Residues Lys-237, Trp-303, and His-305 each contribute to the NADP(+) site. Tyr-358 contacts heme. A phosphoserine mark is found at Ser-422 and Ser-434. An N6-acetyllysine; alternate mark is found at Lys-449 and Lys-480. Residues Lys-449 and Lys-480 each carry the N6-succinyllysine; alternate modification. Residue Lys-499 is modified to N6-acetyllysine. The residue at position 511 (Thr-511) is a Phosphothreonine. The residue at position 517 (Ser-517) is a Phosphoserine. Residues 524–527 (KANL) carry the Microbody targeting signal; atypical motif.

The protein belongs to the catalase family. In terms of assembly, homotetramer. Interacts (via microbody targeting signal) with PEX5, monomeric form interacts with PEX5, leading to its translocation into peroxisomes. It depends on heme as a cofactor. The cofactor is NADP(+).

It localises to the peroxisome matrix. The enzyme catalyses 2 H2O2 = O2 + 2 H2O. In terms of biological role, catalyzes the degradation of hydrogen peroxide (H(2)O(2)) generated by peroxisomal oxidases to water and oxygen, thereby protecting cells from the toxic effects of hydrogen peroxide. Promotes growth of cells including T-cells, B-cells, myeloid leukemia cells, melanoma cells, mastocytoma cells and normal and transformed fibroblast cells. The protein is Catalase (CAT) of Canis lupus familiaris (Dog).